A 395-amino-acid polypeptide reads, in one-letter code: 8-amino-7-oxononanoate synthase (395 aa).

R24 is a substrate binding site. Residue 111 to 112 coordinates pyridoxal 5'-phosphate; the sequence is GF. H136 lines the substrate pocket. Pyridoxal 5'-phosphate is bound by residues S184, 209 to 212, and 240 to 243; these read DDAH and TLSK. At K243 the chain carries N6-(pyridoxal phosphate)lysine. T357 is a substrate binding site.

Belongs to the class-II pyridoxal-phosphate-dependent aminotransferase family. BioF subfamily. Homodimer. Requires pyridoxal 5'-phosphate as cofactor.

The catalysed reaction is 6-carboxyhexanoyl-[ACP] + L-alanine + H(+) = (8S)-8-amino-7-oxononanoate + holo-[ACP] + CO2. Its pathway is cofactor biosynthesis; biotin biosynthesis. Catalyzes the decarboxylative condensation of pimeloyl-[acyl-carrier protein] and L-alanine to produce 8-amino-7-oxononanoate (AON), [acyl-carrier protein], and carbon dioxide. This is 8-amino-7-oxononanoate synthase from Thermoanaerobacter pseudethanolicus (strain ATCC 33223 / 39E) (Clostridium thermohydrosulfuricum).